Here is a 154-residue protein sequence, read N- to C-terminus: SsrA-binding protein (154 aa).

Residues 126 to 154 are disordered; that stretch reads GKKKYDKREDMKKKEAQREVERAFRERQK. Residues 131–154 are compositionally biased toward basic and acidic residues; sequence DKREDMKKKEAQREVERAFRERQK.

It belongs to the SmpB family.

It localises to the cytoplasm. In terms of biological role, required for rescue of stalled ribosomes mediated by trans-translation. Binds to transfer-messenger RNA (tmRNA), required for stable association of tmRNA with ribosomes. tmRNA and SmpB together mimic tRNA shape, replacing the anticodon stem-loop with SmpB. tmRNA is encoded by the ssrA gene; the 2 termini fold to resemble tRNA(Ala) and it encodes a 'tag peptide', a short internal open reading frame. During trans-translation Ala-aminoacylated tmRNA acts like a tRNA, entering the A-site of stalled ribosomes, displacing the stalled mRNA. The ribosome then switches to translate the ORF on the tmRNA; the nascent peptide is terminated with the 'tag peptide' encoded by the tmRNA and targeted for degradation. The ribosome is freed to recommence translation, which seems to be the essential function of trans-translation. The protein is SsrA-binding protein of Anoxybacillus flavithermus (strain DSM 21510 / WK1).